The chain runs to 209 residues: Eukaryotic translation initiation factor 4E (209 aa).

Residues 51-52 (WH), 97-98 (WE), and 153-158 (RKQAYR) contribute to the mRNA site.

The protein belongs to the eukaryotic initiation factor 4E family. In terms of assembly, eIF4F is a multi-subunit complex, the composition of which varies with external and internal environmental conditions. It is composed of at least eIF4A, eIF4E and eIF4G. eIF4E is also known to interact with other partners.

In terms of biological role, recognizes and binds the 7-methylguanosine-containing mRNA cap during an early step in the initiation of protein synthesis and facilitates ribosome binding by inducing the unwinding of the mRNAs secondary structures. In Candida albicans (strain SC5314 / ATCC MYA-2876) (Yeast), this protein is Eukaryotic translation initiation factor 4E (TIF45).